Consider the following 124-residue polypeptide: S-adenosylmethionine decarboxylase proenzyme (124 aa).

Ser-63 acts as the Schiff-base intermediate with substrate; via pyruvic acid in catalysis. A Pyruvic acid (Ser); by autocatalysis modification is found at Ser-63. His-68 (proton acceptor; for processing activity) is an active-site residue. Residue Cys-83 is the Proton donor; for catalytic activity of the active site.

Belongs to the prokaryotic AdoMetDC family. Type 1 subfamily. Heterotetramer of two alpha and two beta chains arranged as a dimer of alpha/beta heterodimers. Requires pyruvate as cofactor. Is synthesized initially as an inactive proenzyme. Formation of the active enzyme involves a self-maturation process in which the active site pyruvoyl group is generated from an internal serine residue via an autocatalytic post-translational modification. Two non-identical subunits are generated from the proenzyme in this reaction, and the pyruvate is formed at the N-terminus of the alpha chain, which is derived from the carboxyl end of the proenzyme. The post-translation cleavage follows an unusual pathway, termed non-hydrolytic serinolysis, in which the side chain hydroxyl group of the serine supplies its oxygen atom to form the C-terminus of the beta chain, while the remainder of the serine residue undergoes an oxidative deamination to produce ammonia and the pyruvoyl group blocking the N-terminus of the alpha chain.

The catalysed reaction is S-adenosyl-L-methionine + H(+) = S-adenosyl 3-(methylsulfanyl)propylamine + CO2. Its pathway is amine and polyamine biosynthesis; S-adenosylmethioninamine biosynthesis; S-adenosylmethioninamine from S-adenosyl-L-methionine: step 1/1. Catalyzes the decarboxylation of S-adenosylmethionine to S-adenosylmethioninamine (dcAdoMet), the propylamine donor required for the synthesis of the polyamines spermine and spermidine from the diamine putrescine. This chain is S-adenosylmethionine decarboxylase proenzyme, found in Anoxybacillus flavithermus (strain DSM 21510 / WK1).